The chain runs to 308 residues: UDP-N-acetylenolpyruvoylglucosamine reductase (308 aa).

An FAD-binding PCMH-type domain is found at 24 to 187 (RVGGPADWLF…VSASLQGVPG (164 aa)). Residue Arg-167 is part of the active site. The disordered stretch occupies residues 199 to 230 (QLDKRDQTQPTKERSAGSTFRNPAGFSSTGRA). Residues 200–213 (LDKRDQTQPTKERS) are compositionally biased toward basic and acidic residues. Positions 214–228 (AGSTFRNPAGFSSTG) are enriched in polar residues. Ser-216 acts as the Proton donor in catalysis. Residue Glu-298 is part of the active site.

This sequence belongs to the MurB family. The cofactor is FAD.

It is found in the cytoplasm. It carries out the reaction UDP-N-acetyl-alpha-D-muramate + NADP(+) = UDP-N-acetyl-3-O-(1-carboxyvinyl)-alpha-D-glucosamine + NADPH + H(+). Its pathway is cell wall biogenesis; peptidoglycan biosynthesis. Its function is as follows. Cell wall formation. In Ruegeria pomeroyi (strain ATCC 700808 / DSM 15171 / DSS-3) (Silicibacter pomeroyi), this protein is UDP-N-acetylenolpyruvoylglucosamine reductase.